Consider the following 129-residue polypeptide: uncharacterized protein (129 aa).

Its subcellular location is the cytoplasm. It is found in the cytosol. It localises to the nucleus. This is an uncharacterized protein from Schizosaccharomyces pombe (strain 972 / ATCC 24843) (Fission yeast).